The chain runs to 210 residues: Glutathione S-transferase P (210 aa).

The 80-residue stretch at 2–81 (PPYTIVYFPV…HLGRSLGLYG (80 aa)) folds into the GST N-terminal domain. Y4 carries the phosphotyrosine; by EGFR modification. Residues Y8, R14, W39, K45, and 52-53 (QL) each bind glutathione. T62 is subject to Phosphothreonine. Residue 65 to 66 (QS) coordinates glutathione. In terms of domain architecture, GST C-terminal spans 83-204 (DQKEAALVDM…SSPDHLNRPI (122 aa)). An N6-succinyllysine mark is found at K103 and K116. K128 is subject to N6-acetyllysine.

The protein belongs to the GST superfamily. Pi family. In terms of assembly, homodimer. Interacts with CDK5. As to expression, present in kidney, lung, testis and placenta, very low levels in liver.

It is found in the cytoplasm. The protein resides in the mitochondrion. Its subcellular location is the nucleus. The enzyme catalyses RX + glutathione = an S-substituted glutathione + a halide anion + H(+). It carries out the reaction prostaglandin J2 + glutathione = prostaglandin J2-S-(R)-glutathione. The catalysed reaction is prostaglandin J2 + glutathione = prostaglandin J2-S-(S)-glutathione. It catalyses the reaction prostaglandin A2 + glutathione = prostaglandin A2-S-(S)-glutathione. The enzyme catalyses 11(S)-hydroxy-14(S),15(S)-epoxy-(5Z,8Z,12E)-eicosatrienoate + glutathione = (11S,15S)-dihydroxy-14(R)-S-glutathionyl-(5Z,8Z,12E)-eicosatrienoate. In terms of biological role, conjugation of reduced glutathione to a wide number of exogenous and endogenous hydrophobic electrophiles. Involved in the formation of glutathione conjugates of both prostaglandin A2 (PGA2) and prostaglandin J2 (PGJ2). Participates in the formation of novel hepoxilin regioisomers. Negatively regulates CDK5 activity via p25/p35 translocation to prevent neurodegeneration. The protein is Glutathione S-transferase P of Rattus norvegicus (Rat).